Consider the following 80-residue polypeptide: Cell division protein ZapB (80 aa).

Residues 3–80 (FEVFEKLEAK…ALLGKMNEVN (78 aa)) are a coiled coil.

Belongs to the ZapB family. As to quaternary structure, homodimer. The ends of the coiled-coil dimer bind to each other, forming polymers. Interacts with FtsZ.

The protein localises to the cytoplasm. Its function is as follows. Non-essential, abundant cell division factor that is required for proper Z-ring formation. It is recruited early to the divisome by direct interaction with FtsZ, stimulating Z-ring assembly and thereby promoting cell division earlier in the cell cycle. Its recruitment to the Z-ring requires functional FtsA or ZipA. The polypeptide is Cell division protein ZapB (Edwardsiella ictaluri (strain 93-146)).